Here is a 333-residue protein sequence, read N- to C-terminus: Catabolite control protein A (333 aa).

The region spanning 7–61 (ITIYDVAREAGVSMATVSRVVNGNKNVKENTRKKVLEVIDRLDYRPNAVARGLAS) is the HTH lacI-type domain. Residues 9-28 (IYDVAREAGVSMATVSRVVN) constitute a DNA-binding region (H-T-H motif).

Its function is as follows. Global transcriptional regulator of carbon catabolite repression (CCR) and carbon catabolite activation (CCA), which ensures optimal energy usage under diverse conditions. In Streptococcus mutans serotype c (strain ATCC 700610 / UA159), this protein is Catabolite control protein A (ccpA).